Reading from the N-terminus, the 333-residue chain is UPF0284 protein TGAM_0534 (333 aa).

This sequence belongs to the UPF0284 family.

This chain is UPF0284 protein TGAM_0534, found in Thermococcus gammatolerans (strain DSM 15229 / JCM 11827 / EJ3).